Here is a 136-residue protein sequence, read N- to C-terminus: Large ribosomal subunit protein uL16 (136 aa).

This sequence belongs to the universal ribosomal protein uL16 family. As to quaternary structure, part of the 50S ribosomal subunit.

In terms of biological role, binds 23S rRNA and is also seen to make contacts with the A and possibly P site tRNAs. In Citrobacter koseri (strain ATCC BAA-895 / CDC 4225-83 / SGSC4696), this protein is Large ribosomal subunit protein uL16.